The primary structure comprises 263 residues: Ribosomal RNA small subunit methyltransferase J (263 aa).

S-adenosyl-L-methionine is bound by residues 108–109 (RD), 124–125 (ER), and D178.

It belongs to the methyltransferase superfamily. RsmJ family.

It is found in the cytoplasm. The enzyme catalyses guanosine(1516) in 16S rRNA + S-adenosyl-L-methionine = N(2)-methylguanosine(1516) in 16S rRNA + S-adenosyl-L-homocysteine + H(+). In terms of biological role, specifically methylates the guanosine in position 1516 of 16S rRNA. This is Ribosomal RNA small subunit methyltransferase J from Idiomarina loihiensis (strain ATCC BAA-735 / DSM 15497 / L2-TR).